We begin with the raw amino-acid sequence, 343 residues long: Transmembrane protein 120A (343 aa).

Residues 1–135 (MQSPPPDPLG…KFAYKDEYEK (135 aa)) are Cytoplasmic-facing. CoA is bound at residue K130. Residues 136-156 (FKLYLTIILIVISFTCRFLLN) traverse the membrane as a helical segment. Residues 157 to 162 (SRVTDA) are Extracellular-facing. Residues 163–183 (AFNFLLVWYYCTLTIRESILI) form a helical membrane-spanning segment. Residues 184–190 (NNGSRIK) lie on the Cytoplasmic side of the membrane. The CoA site is built by S187 and R188. The chain crosses the membrane as a helical span at residues 191–211 (GWWVFHHYVSTFLSGVMLTWP). Residues 212–222 (DGLMYQKFRNQ) are Extracellular-facing. The chain crosses the membrane as a helical span at residues 223–240 (FLSFSMYQSFVQFLQYYY). Residues Q237, Y240, Q241, and H283 each contribute to the CoA site. Residues 241–273 (QSGCLYRLRALGERHTMDLTVEGFQSWMWRGLT) are Cytoplasmic-facing. A helical membrane pass occupies residues 274-294 (FLLPFLFFGHFWQLFNALTLF). The Extracellular segment spans residues 295-305 (NLARDPECKEW). Residues 306 to 326 (QVLMCGFPFLLLFLGNFFTTL) form a helical membrane-spanning segment. At 327 to 343 (RVVHQKFHSQQHGNKKD) the chain is on the cytoplasmic side. A CoA-binding site is contributed by K332.

This sequence belongs to the TMEM120 family. Homodimer. Forms heterooligomer with TMEM120B. Interacts with PKD2; TMEM120A inhibits PKD2 channel activity through the physical association of PKD2 with TMEM120A. In terms of tissue distribution, widely expressed, with higher expression in the heart, kidneys, colon and sensory neurons of the dorsal root ganglia. Expressed in nociceptors. Highly expressed in white adipose tissue (at protein level). Highly expressed in brown adipose tissue and expressed at low levels in liver.

It localises to the cell membrane. Its subcellular location is the nucleus envelope. The protein localises to the nucleus inner membrane. The protein resides in the endoplasmic reticulum. Functionally, multifunctional protein involved in mechanosensation, and plays an essential role in lipid metabolism and adipocyte differentiation. May function as a potential ion channel involved in sensing mechanical stimuli. Mediates the mechanosensitivity of the PKD2-TMEM120A channel complex through direct physical interaction. TMEM120A seems to affect mechanosensation by inhibiting PIEZO2 channels, possibly by altering cellular lipid content. TMEM120A is structurally similar to a lipid-modifying enzyme, ELOVL7, and contains a bound coenzyme A molecule, which suggests it might function as an enzyme in lipid metabolism. The chain is Transmembrane protein 120A from Mus musculus (Mouse).